Consider the following 156-residue polypeptide: Small ribosomal subunit protein uS7c (156 aa).

The protein belongs to the universal ribosomal protein uS7 family. Part of the 30S ribosomal subunit.

It is found in the plastid. The protein localises to the chloroplast. Functionally, one of the primary rRNA binding proteins, it binds directly to 16S rRNA where it nucleates assembly of the head domain of the 30S subunit. The protein is Small ribosomal subunit protein uS7c (rps7) of Cycas revoluta (Sago palm).